Here is a 363-residue protein sequence, read N- to C-terminus: Phosphoserine aminotransferase (363 aa).

An L-glutamate-binding site is contributed by arginine 42. Residues tryptophan 105, threonine 155, aspartate 175, and glutamine 198 each coordinate pyridoxal 5'-phosphate. The residue at position 199 (lysine 199) is an N6-(pyridoxal phosphate)lysine. Residue 240–241 (NT) coordinates pyridoxal 5'-phosphate.

The protein belongs to the class-V pyridoxal-phosphate-dependent aminotransferase family. SerC subfamily. As to quaternary structure, homodimer. Requires pyridoxal 5'-phosphate as cofactor.

The protein localises to the cytoplasm. The catalysed reaction is O-phospho-L-serine + 2-oxoglutarate = 3-phosphooxypyruvate + L-glutamate. It catalyses the reaction 4-(phosphooxy)-L-threonine + 2-oxoglutarate = (R)-3-hydroxy-2-oxo-4-phosphooxybutanoate + L-glutamate. It functions in the pathway amino-acid biosynthesis; L-serine biosynthesis; L-serine from 3-phospho-D-glycerate: step 2/3. It participates in cofactor biosynthesis; pyridoxine 5'-phosphate biosynthesis; pyridoxine 5'-phosphate from D-erythrose 4-phosphate: step 3/5. Its function is as follows. Catalyzes the reversible conversion of 3-phosphohydroxypyruvate to phosphoserine and of 3-hydroxy-2-oxo-4-phosphonooxybutanoate to phosphohydroxythreonine. In Janthinobacterium sp. (strain Marseille) (Minibacterium massiliensis), this protein is Phosphoserine aminotransferase.